The chain runs to 504 residues: 2,3-bisphosphoglycerate-independent phosphoglycerate mutase (504 aa).

The Mn(2+) site is built by Asp-11 and Ser-61. The active-site Phosphoserine intermediate is Ser-61. Residues His-122, Arg-152–Asp-153, Arg-183, Arg-189, Arg-255–Arg-258, and Lys-329 contribute to the substrate site. Mn(2+)-binding residues include Asp-396, His-400, Asp-437, His-438, and His-455.

Belongs to the BPG-independent phosphoglycerate mutase family. Monomer. Mn(2+) is required as a cofactor.

It carries out the reaction (2R)-2-phosphoglycerate = (2R)-3-phosphoglycerate. Its pathway is carbohydrate degradation; glycolysis; pyruvate from D-glyceraldehyde 3-phosphate: step 3/5. Functionally, catalyzes the interconversion of 2-phosphoglycerate and 3-phosphoglycerate. The chain is 2,3-bisphosphoglycerate-independent phosphoglycerate mutase from Bacteroides fragilis (strain YCH46).